Reading from the N-terminus, the 593-residue chain is SPI-1 type 3 secretion system translocon protein SctE (593 aa).

Coiled-coil stretches lie at residues 151–208 and 287–314; these read DTAK…ATDA and EGRQ…NRIM. Helical transmembrane passes span 330–350 and 409–429; these read VVAA…GLAV and IVGA…VAVV.

The protein belongs to the SctE/SipB/YopB family. As to quaternary structure, the core secretion machinery of the T3SS is composed of approximately 20 different proteins, including cytoplasmic components, a base, an export apparatus and a needle. This subunit is involved in the formation of a pore, called the translocon, in host membrane.

The protein resides in the secreted. Its subcellular location is the host membrane. The protein localises to the host cell. Functionally, component of the type III secretion system 1 (SPI-1 T3SS), also called injectisome, which is used to inject bacterial effector proteins into eukaryotic host cells. SipB/SctE1 and SipC/SctB are inserted into the host membrane where they form a pore and allow the translocation of effector proteins into the cytosol of target cells. Its function is as follows. Induces macrophage apoptosis either by binding and activating the proapoptotic enzyme caspase-1 (caspase-1 dependent), resulting in the release of interleukin-1 beta active form, or by disrupting mitochondria and inducing autophagy (caspase-1 independent). The former is dependent of its membrane-fusion activity. The sequence is that of SPI-1 type 3 secretion system translocon protein SctE from Salmonella typhi.